The chain runs to 1140 residues: Envelopment polyprotein (1140 aa).

An N-terminal signal peptide occupies residues 1-17 (MVGWVCISLVVLATTTA). At 18–489 (GLTRNLYELK…VPGLHGWATT (472 aa)) the chain is on the lumenal side. Disulfide bonds link cysteine 30–cysteine 155, cysteine 64–cysteine 161, cysteine 113–cysteine 132, cysteine 137–cysteine 142, cysteine 179–cysteine 189, and cysteine 214–cysteine 251. N-linked (GlcNAc...) asparagine; by host glycosylation occurs at asparagine 138. An N-linked (GlcNAc...) asparagine; by host glycan is attached at asparagine 351. 4 cysteine pairs are disulfide-bonded: cysteine 380–cysteine 439, cysteine 384–cysteine 393, cysteine 409–cysteine 428, and cysteine 456–cysteine 479. A glycan (N-linked (GlcNAc...) asparagine; by host) is linked at asparagine 403. The helical transmembrane segment at 490-510 (ALLITFCFGWLLIPTITMIIL) threads the bilayer. Residues 511–631 (KILRLLTFSC…LGVFRYKSRC (121 aa)) are Cytoplasmic-facing. The segment at 520–537 (CSHYSTESKFKAILERVK) is binding to the ribonucleoprotein. CCHC-type zinc fingers lie at residues 549-569 (CDVCHHECETAKELETHKKSC) and 574-595 (CPYCMTMTESTESALQAHFSIC). Binding to the ribonucleoprotein regions lie at residues 592–609 (FSICKLTNRFQENLKKSL), 596–607 (KLTNRFQENLKK), and 615–629 (KQGCYRTLGVFRYKS). Residues 611–638 (RPEVKQGCYRTLGVFRYKSRCYVGLVWG) form an interaction with host TRAF3 region. An ITAM domain is found at 615 to 638 (KQGCYRTLGVFRYKSRCYVGLVWG). Residues tyrosine 619 and tyrosine 632 each carry the phosphotyrosine; by host modification. The YxxL motif lies at 619–622 (YRTL). The chain crosses the membrane as a helical span at residues 632–652 (YVGLVWGVLLTTELIVWAASA). The Lumenal segment spans residues 653–1108 (DTPLMESGWS…EWLLGILNGN (456 aa)). 8 disulfides stabilise this stretch: cysteine 739-cysteine 774, cysteine 743-cysteine 781, cysteine 755-cysteine 888, cysteine 769-cysteine 899, cysteine 784-cysteine 907, cysteine 810-cysteine 819, cysteine 827-cysteine 836, and cysteine 867-cysteine 871. Positions 761–781 (YQYETSWGCNPPDCPGVGTGC) are fusion loop. N-linked (GlcNAc...) asparagine; by host glycosylation occurs at asparagine 931. 5 disulfide bridges follow: cysteine 973/cysteine 1003, cysteine 996/cysteine 1048, cysteine 1013/cysteine 1018, cysteine 1049/cysteine 1054, and cysteine 1088/cysteine 1092. The helical transmembrane segment at 1109-1129 (WVVVAVLIVILILSILLFSFF) threads the bilayer. A binding to the ribonucleoprotein region spans residues 1125-1140 (LFSFFCPIRGRKNKSN). The Cytoplasmic portion of the chain corresponds to 1130-1140 (CPIRGRKNKSN).

This sequence belongs to the hantavirus envelope glycoprotein family. Homodimer. Homotetramer; forms heterotetrameric Gn-Gc spikes in the pre-fusion conformation. Interacts (via C-terminus) with the nucleoprotein. Interacts with host TUFM; this interaction contributes to the virus-induced degradation of mitochondria by autophagy, which leads to degradation of host MAVS and inhibition of type I interferon (IFN) responses. Interacts with host MAP1LC3B; this interaction contributes to the virus-induced degradation of mitochondria by autophagy, which leads to degradation of host MAVS and inhibition of type I interferon (IFN) responses. Interacts (via C-terminus) with host TRAF3 (via N-terminus); this interaction inhibits the formation of TRAF3-TBK1 complexes. In terms of assembly, homodimer. Homotetramer; forms heterotetrameric Gn-Gc spikes in the pre-fusion conformation. Homotrimer; forms homotrimer in the post-fusion conformation at acidic pH. Interacts (via C-terminus) with the nucleoprotein. Post-translationally, envelope polyprotein precursor is quickly cleaved in vivo just after synthesis, presumably by host signal peptidase.

It localises to the virion membrane. The protein resides in the host cell surface. The protein localises to the host Golgi apparatus membrane. It is found in the host endoplasmic reticulum membrane. Its subcellular location is the host mitochondrion. Functionally, forms homotetramers with glycoprotein C at the surface of the virion. Attaches the virion to host cell receptors including integrin ITGAV/ITGB3. This attachment induces virion internalization predominantly through clathrin-dependent endocytosis. Mediates the assembly and budding of infectious virus particles through its interaction with the nucleocapsid protein and the viral genome. May dysregulate normal immune and endothelial cell responses through an ITAM motif. Translocates to mitochondria, binds to host TUFM and recruits MAP1LC3B. These interactions induce mitochondrial autophagy and therefore destruction of host MAVS leading to inhibition of type I interferon (IFN) responses. Concomitant breakdown of glycoprotein N is apparently prevented by the nucleoprotein that may inhibit Gn-stimulated autophagosome-lysosome fusion. Interacts with the viral genomic RNA. Inhibits the host RIG-I/TBK1 pathway by disrupting the formation of TBK1-TRAF3 complexes and downstream signaling responses required for IFN-beta transcription. Forms homotetramers with glycoprotein N at the surface of the virion. Attaches the virion to host cell receptors including integrin ITGAV/ITGB3. This attachment induces virion internalization predominantly through clathrin-dependent endocytosis. Class II fusion protein that promotes fusion of viral membrane with host endosomal membrane after endocytosis of the virion. The sequence is that of Envelopment polyprotein (GP) from Homo sapiens (Human).